The chain runs to 435 residues: Glutamyl-tRNA reductase (435 aa).

Residues 49–52, Ser109, 114–116, and Gln120 contribute to the substrate site; these read TCNR and EGQ. The active-site Nucleophile is the Cys50. 198–203 provides a ligand contact to NADP(+); that stretch reads GAGRMS.

This sequence belongs to the glutamyl-tRNA reductase family. As to quaternary structure, homodimer.

The enzyme catalyses (S)-4-amino-5-oxopentanoate + tRNA(Glu) + NADP(+) = L-glutamyl-tRNA(Glu) + NADPH + H(+). It functions in the pathway porphyrin-containing compound metabolism; protoporphyrin-IX biosynthesis; 5-aminolevulinate from L-glutamyl-tRNA(Glu): step 1/2. The protein operates within porphyrin-containing compound metabolism; chlorophyll biosynthesis. Functionally, catalyzes the NADPH-dependent reduction of glutamyl-tRNA(Glu) to glutamate 1-semialdehyde (GSA). The sequence is that of Glutamyl-tRNA reductase from Prochlorococcus marinus (strain MIT 9211).